We begin with the raw amino-acid sequence, 388 residues long: Cell adhesion molecule 4 (388 aa).

The N-terminal stretch at 1-20 (MGRARRFQWPLLLLWAAAAG) is a signal peptide. The 99-residue stretch at 21–119 (PGAGQEVQTE…DTHHQIATLT (99 aa)) folds into the Ig-like V-type domain. Residues 21 to 324 (PGAGQEVQTE…VEAQTSVPYA (304 aa)) lie on the Extracellular side of the membrane. Residues N31 and N67 are each glycosylated (N-linked (GlcNAc...) asparagine). Disulfide bonds link C44/C104, C145/C199, and C245/C291. Ig-like C2-type domains lie at 124 to 219 (PENP…YVLD) and 224 to 307 (PTAR…YVLV). N-linked (GlcNAc...) asparagine glycosylation is present at N286. The chain crosses the membrane as a helical span at residues 325–345 (IVGGILALLVFLIICVLVGMV). The Cytoplasmic portion of the chain corresponds to 346 to 388 (WCSVRQKGSYLTHEASGLDEQGEAREAFLNGSDGHKRKEEFFI). Position 361 is a phosphoserine (S361).

It belongs to the nectin family. In terms of assembly, monomer and homodimer. In terms of processing, N-glycosylated. In terms of tissue distribution, expressed in brain, prostate, brain, kidney and some other organs.

Its subcellular location is the membrane. In terms of biological role, involved in the cell-cell adhesion. Has calcium- and magnesium-independent cell-cell adhesion activity. May have tumor-suppressor activity. In Homo sapiens (Human), this protein is Cell adhesion molecule 4 (CADM4).